The sequence spans 131 residues: Small ribosomal subunit protein uS8 (131 aa).

It belongs to the universal ribosomal protein uS8 family. In terms of assembly, part of the 30S ribosomal subunit. Contacts proteins S5 and S12.

In terms of biological role, one of the primary rRNA binding proteins, it binds directly to 16S rRNA central domain where it helps coordinate assembly of the platform of the 30S subunit. The polypeptide is Small ribosomal subunit protein uS8 (Nitrosomonas eutropha (strain DSM 101675 / C91 / Nm57)).